The chain runs to 31 residues: Cytochrome b6-f complex subunit 6 (31 aa).

The helical transmembrane segment at 4 to 26 threads the bilayer; that stretch reads IVSYFGFLLTASTITPALFIGLS.

It belongs to the PetL family. The 4 large subunits of the cytochrome b6-f complex are cytochrome b6, subunit IV (17 kDa polypeptide, PetD), cytochrome f and the Rieske protein, while the 4 small subunits are PetG, PetL, PetM and PetN. The complex functions as a dimer.

It is found in the plastid. It localises to the chloroplast thylakoid membrane. Component of the cytochrome b6-f complex, which mediates electron transfer between photosystem II (PSII) and photosystem I (PSI), cyclic electron flow around PSI, and state transitions. PetL is important for photoautotrophic growth as well as for electron transfer efficiency and stability of the cytochrome b6-f complex. The protein is Cytochrome b6-f complex subunit 6 of Nymphaea alba (White water-lily).